The following is a 422-amino-acid chain: Roquefortine prenyltransferase roqD (422 aa).

A substrate-binding site is contributed by E100. Residues R113, K200, and Y202 each contribute to the dimethylallyl diphosphate site. Y204 is a binding site for substrate. K268, Y270, Y353, Y416, and Y420 together coordinate dimethylallyl diphosphate.

This sequence belongs to the tryptophan dimethylallyltransferase family.

It functions in the pathway alkaloid biosynthesis. Its function is as follows. Roquefortine prenyltransferase; part of the gene cluster that mediates the biosynthesis of the mycotoxins roquefortine C and meleagrin. The first stage is catalyzed by the dipeptide synthase roqA which condenses histidine and tryptophan to produce histidyltryptophanyldiketopiperazine (HTD). HTD is then converted to roquefortine C through two possible pathways. In the first pathway, prenyltransferase roqD transforms HTD to the intermediate roquefortine D, which is in turn converted to roquefortine C by the cytochrome P450 monooxygenase roqR. In the second pathway, HTD is first converted to the intermediate dehydrohistidyltryptophanyldi-ketopiperazine (DHTD) by roqR which is then prenylated by roqD to form roquefortine C. Roquefortine C can be further transformed to meleagrin via three more reactions including oxydation to glandicolin A by roqM, which is further reduced to glandicoline B by roqO. Finally, glandicoline B is converted to meleagrin by the glandicoline B O-methyltransferase roqN. More studies identified further branching and additional metabolites produced by the roquefortine/meleagrin cluster, including roquefortine F, roquefortine L, roquefortine M, roquefortine N and neoxaline. The polypeptide is Roquefortine prenyltransferase roqD (Penicillium rubens (strain ATCC 28089 / DSM 1075 / NRRL 1951 / Wisconsin 54-1255) (Penicillium chrysogenum)).